Consider the following 113-residue polypeptide: Sensorin-A (113 aa).

The signal sequence occupies residues 1–32; the sequence is MPSRAATSPLNVQMMVVLCIVCLALQAVAANA. Phe-54 carries the post-translational modification Phenylalanine amide. A propeptide spanning residues 58–113 is cleaved from the precursor; sequence SSSETYSTNLINLLSRQLVSQEELRAILEKQPILLDEVVKILDRNDDGYITVADLL. Residues 87–113 form the EF-hand domain; sequence KQPILLDEVVKILDRNDDGYITVADLL. 5 residues coordinate Ca(2+): Asp-100, Asn-102, Asp-104, Tyr-106, and Asp-111.

Seems to be specific to the mechanosensory neurons of the central nervous system.

The protein resides in the secreted. Its function is as follows. May function as an inhibitory cotransmitter acting in conjunction with the fast excitatory transmitter released by sensory neurons. The peptide selectively inhibits certain postsynaptic cells probably by means of sensorin A release. This Aplysia californica (California sea hare) protein is Sensorin-A (PSC1).